The following is a 116-amino-acid chain: Thioredoxin H-type (116 aa).

The Thioredoxin domain occupies 2-115 (AEEAQVIACH…HKIAVHAPIT (114 aa)). Residues Cys39 and Cys42 each act as nucleophile in the active site. Cys39 and Cys42 form a disulfide bridge.

The protein belongs to the thioredoxin family. Plant H-type subfamily.

It localises to the cytoplasm. Its function is as follows. Participates in various redox reactions through the reversible oxidation of the active center dithiol to a disulfide. The H form is known to activate a number of cytosolic enzymes. The chain is Thioredoxin H-type from Fagopyrum esculentum (Common buckwheat).